Here is a 492-residue protein sequence, read N- to C-terminus: MAKSKKKTDVVDSTNLPILELLSLKAPIFQSLLHPELPIIITGFGTGHIVCHRYDPAKLQSHLDRRRRIDTATTGKDAKKGVCPWIRLDIDLETGDLKLVDIEEQHQQKQTGKDEDLGVKTLWKTKRHKGSVRAMCFDSKGDNIFSVGSDNVLKKANTMTGKVVKKVNLSSLFNSEEKKNDKFTKLCASQTHPFILIGDESGNIHVINSENLALSNSIRSIHFGDSINDIFHFDKRSAYKFISLGQTTLAYFDVRDKDAKPNVAGNEDGKILISDDQEDEVLCGCFVDPEVADTLLCGMGEGIVTVWKPNKNDLEDQMSRIKISKDESIDCIVPTLQDDNCVWCGCSNGNIYKVNAKLGKVVEVRNHNELDEVSFVDLDFEYRVVSGGLENIKIWELSSDDVEENASVESDSDEPLSHSDEDLSDDTSSDDETTLVGLSKEELLDELDKDLKEDHQEEKESNSKSVKKRKIMKENNKKKDLYEHGIKKFDDL.

5 WD repeats span residues 127–166, 178–217, 236–274, 276–317, and 365–405; these read RHKG…VVKK, KKND…LSNS, RSAY…ILIS, DQED…LEDQ, and RNHN…VEEN. Composition is skewed to acidic residues over residues 404–414 and 422–433; these read ENASVESDSDE and DLSDDTSSDDET. The tract at residues 404-472 is disordered; that stretch reads ENASVESDSD…SKSVKKRKIM (69 aa). The span at 449–462 shows a compositional bias: basic and acidic residues; sequence KDLKEDHQEEKESN.

Belongs to the WD repeat WDR55 family. In terms of assembly, interacts with BRE1, BUD27 and GIS1.

It is found in the nucleus. It localises to the nucleolus. The polypeptide is WD repeat-containing protein JIP5 (JIP5) (Saccharomyces cerevisiae (strain YJM789) (Baker's yeast)).